The sequence spans 197 residues: MMFFKRTILACTVALLFPALPSYAEVGAENGNSAQAEKPGLWKRFTSNVAETWNNSPNKDLYVPAITWHNRLTYSQEKIDSYNERPWGGGYGISRYDSDGDWHGLYMMVFKDSFNKWEPIGGYAYEKIWRPLEDKDFRLGLGFTASITARDNWNYIPIPAPLPLASIGYKQLTFQATYIPGTYNNGNVFFGWFRWQF.

An N-terminal signal peptide occupies residues 1-24 (MMFFKRTILACTVALLFPALPSYA). Residues H69, D112, and S113 contribute to the active site.

Belongs to the lipid A palmitoyltransferase family. Homodimer.

The protein localises to the cell outer membrane. It catalyses the reaction a lipid A + a 1,2-diacyl-sn-glycero-3-phosphocholine = a hepta-acyl lipid A + a 2-acyl-sn-glycero-3-phosphocholine. The enzyme catalyses a lipid IVA + a 1,2-diacyl-sn-glycero-3-phosphocholine = a lipid IVB + a 2-acyl-sn-glycero-3-phosphocholine. It carries out the reaction a lipid IIA + a 1,2-diacyl-sn-glycero-3-phosphocholine = a lipid IIB + a 2-acyl-sn-glycero-3-phosphocholine. Transfers a fatty acid residue from the sn-1 position of a phospholipid to the N-linked hydroxyfatty acid chain on the proximal unit of lipid A or its precursors. This is Lipid A acyltransferase PagP from Serratia proteamaculans (strain 568).